The following is a 671-amino-acid chain: Transcriptional regulator Kaiso (671 aa).

Residues 1–103 (MESRKLISAT…RADLLDELIK (103 aa)) form an interaction with NCOR1 region. The segment at 1 to 136 (MESRKLISAT…SGTEQDGTAE (136 aa)) is self-association. In terms of domain architecture, BTB spans 32–94 (CDVTVIVEDR…IYSSKVVRVR (63 aa)). Polar residues predominate over residues 127–144 (SGTEQDGTAETLPSSSSD). A disordered region spans residues 127 to 161 (SGTEQDGTAETLPSSSSDKSLDMEKSKDEAQDNGA). A compositionally biased stretch (basic and acidic residues) spans 145–156 (KSLDMEKSKDEA). Glycyl lysine isopeptide (Lys-Gly) (interchain with G-Cter in SUMO2) cross-links involve residues K151 and K153. A Phosphothreonine modification is found at T251. The interval 298–571 (LPNHMSSSVN…FMSSHIKSVH (274 aa)) is interaction with CBFA2T3. The disordered stretch occupies residues 332–365 (IIDDDDDIISSSPDSAVSNTSLVPQADNSKSTTL). The span at 347 to 365 (AVSNTSLVPQADNSKSTTL) shows a compositional bias: polar residues. Residues K388, K405, K412, and K447 each participate in a glycyl lysine isopeptide (Lys-Gly) (interchain with G-Cter in SUMO2) cross-link. Residues 451–461 (DGGEAKLDNEL) are compositionally biased toward basic and acidic residues. A disordered region spans residues 451–474 (DGGEAKLDNELPKTSGSEPPNKRM). An interaction with CTNND1 region spans residues 452–671 (GGEAKLDNEL…EFEFIIPESY (220 aa)). Residues K463, K472, and K477 each participate in a glycyl lysine isopeptide (Lys-Gly) (interchain with G-Cter in SUMO2) cross-link. The Nuclear localization signal signature appears at 469 to 478 (PPNKRMKVKH). 3 consecutive C2H2-type zinc fingers follow at residues 492-514 (YICI…FNIH), 520-542 (YQCR…EIHH), and 548-571 (YQCL…KSVH). Positions 512–637 (NIHSWEKKYQ…TSTPPQNKST (126 aa)) are required for DNA-binding. Glycyl lysine isopeptide (Lys-Gly) (interchain with G-Cter in SUMO2) cross-links involve residues K537, K568, K580, K609, and K616.

In terms of assembly, interacts with NCOR1. Self-associates. Interacts with CTNND1, and this interaction inhibits binding to both methylated and non-methylated DNA. Interacts with CTNND2. Interacts with KPNA2/RCH1, which may mediate nuclear import of this protein. Interacts with CBFA2T3. Expressed in brain, heart, kidney, liver, lung, neuromuscular junctions, skeletal muscle, spleen and testis.

The protein resides in the nucleus. Transcriptional regulator with bimodal DNA-binding specificity. Binds to methylated CpG dinucleotides in the consensus sequence 5'-CGCG-3' and also binds to the non-methylated consensus sequence 5'-CTGCNA-3' also known as the consensus kaiso binding site (KBS). May recruit the N-CoR repressor complex to promote histone deacetylation and the formation of repressive chromatin structures in target gene promoters. Contributes to the repression of target genes of the Wnt signaling pathway. May also activate transcription of a subset of target genes by the recruitment of CTNND2. Represses expression of MMP7 in conjunction with transcriptional corepressors CBFA2T3, CBFA2T2 and RUNX1T1. The chain is Transcriptional regulator Kaiso (Zbtb33) from Mus musculus (Mouse).